A 225-amino-acid chain; its full sequence is Nuclear protein UL4 homolog (225 aa).

Belongs to the alphaherpesvirinae HHV-1 UL4 family.

The protein resides in the host nucleus. This chain is Nuclear protein UL4 homolog, found in Equus caballus (Horse).